The following is a 214-amino-acid chain: Probable chemoreceptor glutamine deamidase CheD (214 aa).

This sequence belongs to the CheD family.

It carries out the reaction L-glutaminyl-[protein] + H2O = L-glutamyl-[protein] + NH4(+). In terms of biological role, probably deamidates glutamine residues to glutamate on methyl-accepting chemotaxis receptors (MCPs), playing an important role in chemotaxis. In Vibrio vulnificus (strain YJ016), this protein is Probable chemoreceptor glutamine deamidase CheD.